The primary structure comprises 217 residues: Ras-related protein RABA2d (217 aa).

19–26 (GDSGVGKT) lines the GTP pocket. The short motif at 41–49 (SKSTIGVEF) is the Effector region element. GTP-binding positions include 67 to 71 (DTAGQ), 125 to 128 (NKAD), and 155 to 156 (SA). The segment at 196–217 (GQGTTINVEDTSGAGKRGCCST) is disordered. S-geranylgeranyl cysteine attachment occurs at residues Cys214 and Cys215.

This sequence belongs to the small GTPase superfamily. Rab family. Expressed in root tips.

It localises to the endosome membrane. Its subcellular location is the golgi apparatus. The protein resides in the trans-Golgi network membrane. Intracellular vesicle trafficking and protein transport. The chain is Ras-related protein RABA2d (RABA2D) from Arabidopsis thaliana (Mouse-ear cress).